Here is a 289-residue protein sequence, read N- to C-terminus: Rhodopsin (289 aa).

Topologically, residues 1-7 (YLVNPAA) are extracellular. The chain crosses the membrane as a helical span at residues 8–32 (YAALGAYMFLLILIGFPINFLTLYV). Over 33–44 (TLEHKKLRTPLN) the chain is Cytoplasmic. Residues 45–67 (YILLNLAVGNLFMVLGGFTTTMY) traverse the membrane as a helical segment. The Extracellular segment spans residues 68-81 (TSMHGYFVLGRLGC). Cysteines 81 and 158 form a disulfide. A helical membrane pass occupies residues 82–104 (NLEGFFATLGGEIALWSLVVLAI). The 'Ionic lock' involved in activated form stabilization signature appears at 105–107 (ERW). The Cytoplasmic portion of the chain corresponds to 105–123 (ERWIVVCKPISKFRFTEDH). Residues 124–144 (AIMGLAFSWVMGLACAVPPLV) form a helical membrane-spanning segment. Residues 145 to 173 (GWSRYIPEGMKCSCGVDYYTRAEGFNNES) are Extracellular-facing. Asn-171 carries N-linked (GlcNAc...) asparagine glycosylation. A helical membrane pass occupies residues 174–195 (FVIYMFIVHFLIPLSVIFFCYG). Residues 196–223 (RLLCAVKEAAAAQQESETTQRAEKEVSR) are Cytoplasmic-facing. The chain crosses the membrane as a helical span at residues 224-245 (MVVIMVIGFLVCWLPYASVAWW). Residues 246–257 (IFCNQGSDFGPI) lie on the Extracellular side of the membrane. A helical membrane pass occupies residues 258-279 (FMTLPSFFAKRPAIYNPMIYIC). Lys-267 is modified (N6-(retinylidene)lysine). The Cytoplasmic portion of the chain corresponds to 280 to 289 (MNKQFRHCMI).

It belongs to the G-protein coupled receptor 1 family. Opsin subfamily. Phosphorylated on some or all of the serine and threonine residues present in the C-terminal region. Post-translationally, contains one covalently linked retinal chromophore.

It localises to the membrane. It is found in the cell projection. Its subcellular location is the cilium. The protein resides in the photoreceptor outer segment. Its function is as follows. Photoreceptor required for image-forming vision at low light intensity. While most salt water fish species use retinal as chromophore, most freshwater fish use 3-dehydroretinal, or a mixture of retinal and 3-dehydroretinal. Light-induced isomerization of 11-cis to all-trans retinal triggers a conformational change that activates signaling via G-proteins. Subsequent receptor phosphorylation mediates displacement of the bound G-protein alpha subunit by arrestin and terminates signaling. The polypeptide is Rhodopsin (rho) (Cottinella boulengeri (Short-headed sculpin)).